A 397-amino-acid chain; its full sequence is Acetate kinase (397 aa).

Residue asparagine 8 participates in Mg(2+) binding. Lysine 15 lines the ATP pocket. Arginine 92 is a substrate binding site. The active-site Proton donor/acceptor is the aspartate 149. ATP-binding positions include 209–213 (HLGNG), 283–285 (DFR), and 331–335 (GVGEN). Glutamate 385 lines the Mg(2+) pocket.

Belongs to the acetokinase family. In terms of assembly, homodimer. Mg(2+) serves as cofactor. The cofactor is Mn(2+).

The protein localises to the cytoplasm. The catalysed reaction is acetate + ATP = acetyl phosphate + ADP. It functions in the pathway metabolic intermediate biosynthesis; acetyl-CoA biosynthesis; acetyl-CoA from acetate: step 1/2. Catalyzes the formation of acetyl phosphate from acetate and ATP. Can also catalyze the reverse reaction. The sequence is that of Acetate kinase from Corynebacterium glutamicum (strain ATCC 13032 / DSM 20300 / JCM 1318 / BCRC 11384 / CCUG 27702 / LMG 3730 / NBRC 12168 / NCIMB 10025 / NRRL B-2784 / 534).